Reading from the N-terminus, the 188-residue chain is Elongation factor P-like protein (188 aa).

The protein belongs to the elongation factor P family.

This Vibrio campbellii (strain ATCC BAA-1116) protein is Elongation factor P-like protein.